A 529-amino-acid polypeptide reads, in one-letter code: Glycylpeptide N-tetradecanoyltransferase (529 aa).

The span at 1–10 shows a compositional bias: polar residues; sequence MSEQEGNQSE. The tract at residues 1-65 is disordered; the sequence is MSEQEGNQSE…ANPATKLTPS (65 aa). Residues 11-23 show a composition bias toward basic and acidic residues; the sequence is HQSEHVGESEGKL. The span at 26 to 40 shows a compositional bias: polar residues; it reads ETPTTSQSTNASTGT. Tetradecanoyl-CoA-binding positions include 118-121, 252-254, and 260-264; these read FKFW, LCV, and SKRLT. V529 serves as the catalytic Proton acceptor; via carboxylate.

It belongs to the NMT family. In terms of assembly, monomer.

It localises to the cytoplasm. The enzyme catalyses N-terminal glycyl-[protein] + tetradecanoyl-CoA = N-tetradecanoylglycyl-[protein] + CoA + H(+). In terms of biological role, adds a myristoyl group to the N-terminal glycine residue of certain cellular proteins. This Ajellomyces capsulatus (Darling's disease fungus) protein is Glycylpeptide N-tetradecanoyltransferase.